We begin with the raw amino-acid sequence, 4034 residues long: Polyketide synthase-nonribosomal peptide synthetase ACE1 (4034 aa).

One can recognise a Ketosynthase family 3 (KS3) domain in the interval 10–448 (TEPIAIIGSG…GANAHVILES (439 aa)). Active-site for beta-ketoacyl synthase activity residues include Cys-183, His-322, and His-368. Positions 560-879 (VFTGQGAQWA…PYFGCLSRGT (320 aa)) are acyl transferase. Residues 951–1082 (NELLGTRLPD…GDLVVLLGEP (132 aa)) are N-terminal hotdog fold. Positions 951–1257 (NELLGTRLPD…TKPLSPPSAA (307 aa)) constitute a PKS/mFAS DH domain. Residues 952–1252 (ELLGTRLPDD…LQGLHTKPLS (301 aa)) form a dehydratase (DH) domain region. The active-site Proton acceptor; for dehydratase activity is the His-983. Residues 1097–1257 (MKDIDEERFY…TKPLSPPSAA (161 aa)) are C-terminal hotdog fold. Asp-1157 acts as the Proton donor; for dehydratase activity in catalysis. The tract at residues 1396–1594 (NMLNRFYSDA…SGADIVTPHH (199 aa)) is methyltransferase (MT) domain. The interval 2144-2317 (TYWLVGLTGG…AGSSVEIGCI (174 aa)) is ketoreductase (KR)domain. The Carrier 1 domain occupies 2424–2505 (KSSEEVLDIL…LLLEFVQGLI (82 aa)). Ser-2465 is modified (O-(pantetheine 4'-phosphoryl)serine). Positions 2512-2598 (KLDGSDGADA…SPTTSASMAS (87 aa)) are disordered. Low complexity predominate over residues 2556-2577 (PSGPASPTSPSSATASPGRSRS). Polar residues predominate over residues 2586–2598 (TPVSPTTSASMAS). A condensation region spans residues 2608 to 3037 (TVPVSFGQSR…ATSLNRPAIY (430 aa)). Residues 3073–3473 (KYATKFALRN…GGLIIEGRID (401 aa)) are adenylation. In terms of domain architecture, Carrier 2 spans 3598 to 3678 (AELGSDQARM…AMTDLVLSDD (81 aa)). Position 3638 is an O-(pantetheine 4'-phosphoryl)serine (Ser-3638). Residues 3719 to 3944 (LTGATGFLGR…DFVSVENVAA (226 aa)) form a reductase-like region.

Belongs to the NRP synthetase family.

Its subcellular location is the cytoplasm. The protein operates within secondary metabolite biosynthesis. Hybrid PKS-NRPS synthetase; part of the gene cluster that mediates the biosynthesis of a tyrosine-derived cytochalasan acting as a fungal signal recognized by resistant rice plants and leads to avirulence in Pi33 resistant rice cultivars. The first step in the pathway is catalyzed by the hybrid PKS-NRPS ACE1, assisted by the enoyl reductase RAP1, that are responsible for fusion of the tyrosine precursor and the polyketide backbone. The polyketide synthase module (PKS) of ACE1 is responsible for the synthesis of the polyketide backbone and the downstream nonribosomal peptide synthetase (NRPS) amidates the carboxyl end of the polyketide with the tyrosine precursor. Because ACE1 lacks a designated enoylreductase (ER) domain, the required activity is provided the enoyl reductase RAP1. Reduction by the hydrolyase ORFZ, followed by dehydration and intra-molecular Diels-Alder cyclization by the Diels-Alderase ORF3 then yield the required isoindolone-fused macrocycle. A number of oxidative steps catalyzed by the tailoring enzymes identified within the cluster, including cytochrome P450 monooxygenases CYP1 to CYP4, the FAD-linked oxidoreductase OXR2 and the short-chain dehydrogenase/reductase OXR1, are further required to afford the final cytochalasans that confer avirulence and which have still to be identified. The monooxygenase CYP1 has been shown to be a site-selective C-18 hydroxylase whereas the function of CYP3 is the site-selective epoxidation of the C-6/C-7 olefin that is present in some intermediate compounds. Finally, SYN2 and RAP2 are not required for avirulence in Pi33 resistant rice cultivars. The polypeptide is Polyketide synthase-nonribosomal peptide synthetase ACE1 (Pyricularia oryzae (strain 70-15 / ATCC MYA-4617 / FGSC 8958) (Rice blast fungus)).